Here is a 283-residue protein sequence, read N- to C-terminus: MKEDNNTSEESGRINRRNVLKTVGAAGLFAAGSTGMAAAADSLSQAEEPKLLTGTEKRTLARELAKTPAFRELAQRARADGAQIRSDADSIVAGYARGEDFAREVVQYDLENLTDAAEASIVIGRNPETGEIEVANLDYYYETDDGVLDEVHRFEPTNASETDGVQSAATSDGATVIAVDTDAIREAQNSEIDVDESSPSNAAPTPADIDITGCSACKYAAGQVCTIGCSAAGGFICGLLGITIPVAGLSCLGFVEIVCTVADEYSGCGDAVAKEACNRAGLC.

The tat-type signal signal peptide spans 1–40 (MKEDNNTSEESGRINRRNVLKTVGAAGLFAAGSTGMAAAA). The helix-loop-helix (HLH) region stretch occupies residues 61 to 75 (ARELAKTPAFRELAQ).

In terms of assembly, immunity protein HalI interacts with Halocin-C8; the interaction is direct. Predicted to be exported by the Tat system. The position of the signal peptide cleavage has not been experimentally proven.

The protein localises to the secreted. It is found in the cell membrane. Has antibacterial activity against a wide variety of haloarchaeons. Causes cell lysis and death, possibly by disrupting the cell wall. Its function is as follows. Acts as an immunity protein for halocin-C8. Able to block the halocin-C8 activity by sequestering the activity of halocin-C8 through specific and direct binding. The protein is Pre-protein-C8 (proC8) of Halobacterium sp. (strain AS7092).